We begin with the raw amino-acid sequence, 316 residues long: 4-hydroxy-3-methylbut-2-enyl diphosphate reductase (316 aa).

Residue cysteine 12 participates in [4Fe-4S] cluster binding. (2E)-4-hydroxy-3-methylbut-2-enyl diphosphate is bound by residues histidine 41 and histidine 74. The dimethylallyl diphosphate site is built by histidine 41 and histidine 74. The isopentenyl diphosphate site is built by histidine 41 and histidine 74. Cysteine 96 serves as a coordination point for [4Fe-4S] cluster. Position 124 (histidine 124) interacts with (2E)-4-hydroxy-3-methylbut-2-enyl diphosphate. Histidine 124 contacts dimethylallyl diphosphate. Histidine 124 serves as a coordination point for isopentenyl diphosphate. Glutamate 126 acts as the Proton donor in catalysis. Threonine 169 is a (2E)-4-hydroxy-3-methylbut-2-enyl diphosphate binding site. Position 199 (cysteine 199) interacts with [4Fe-4S] cluster. Residues serine 227, serine 228, asparagine 229, and serine 271 each contribute to the (2E)-4-hydroxy-3-methylbut-2-enyl diphosphate site. Serine 227, serine 228, asparagine 229, and serine 271 together coordinate dimethylallyl diphosphate. 4 residues coordinate isopentenyl diphosphate: serine 227, serine 228, asparagine 229, and serine 271.

The protein belongs to the IspH family. The cofactor is [4Fe-4S] cluster.

The enzyme catalyses isopentenyl diphosphate + 2 oxidized [2Fe-2S]-[ferredoxin] + H2O = (2E)-4-hydroxy-3-methylbut-2-enyl diphosphate + 2 reduced [2Fe-2S]-[ferredoxin] + 2 H(+). It carries out the reaction dimethylallyl diphosphate + 2 oxidized [2Fe-2S]-[ferredoxin] + H2O = (2E)-4-hydroxy-3-methylbut-2-enyl diphosphate + 2 reduced [2Fe-2S]-[ferredoxin] + 2 H(+). Its pathway is isoprenoid biosynthesis; dimethylallyl diphosphate biosynthesis; dimethylallyl diphosphate from (2E)-4-hydroxy-3-methylbutenyl diphosphate: step 1/1. It participates in isoprenoid biosynthesis; isopentenyl diphosphate biosynthesis via DXP pathway; isopentenyl diphosphate from 1-deoxy-D-xylulose 5-phosphate: step 6/6. Its function is as follows. Catalyzes the conversion of 1-hydroxy-2-methyl-2-(E)-butenyl 4-diphosphate (HMBPP) into a mixture of isopentenyl diphosphate (IPP) and dimethylallyl diphosphate (DMAPP). Acts in the terminal step of the DOXP/MEP pathway for isoprenoid precursor biosynthesis. This chain is 4-hydroxy-3-methylbut-2-enyl diphosphate reductase, found in Vibrio cholerae serotype O1 (strain ATCC 39315 / El Tor Inaba N16961).